The primary structure comprises 387 residues: Transmembrane protein 120 homolog (387 aa).

The stretch at 1–39 (MNIDSLKNEWEELNKEFAELESCNRRYIELLEQLHSHQQ) forms a coiled coil. Residue Asn111 is glycosylated (N-linked (GlcNAc...) asparagine). 6 helical membrane passes run 130–150 (FKLI…IFNY), 155–175 (LAFI…ESIL), 191–211 (FIST…HWQI), 216–238 (FMYF…KGLL), 264–284 (GLSF…YNAW), and 302–322 (VMSG…LWVV). Positions 346-387 (RKEMKNSASDLDLSSGSKLSPTATTTTSIATATQTPAEKKET) are disordered. Residues Ser352, Ser354, and Ser365 each carry the phosphoserine modification. Positions 352 to 381 (SASDLDLSSGSKLSPTATTTTSIATATQTP) are enriched in low complexity.

It belongs to the TMEM120 family.

Its subcellular location is the membrane. This chain is Transmembrane protein 120 homolog, found in Drosophila melanogaster (Fruit fly).